The chain runs to 91 residues: Pre-early 3 receptor internalization and degradation alpha protein (91 aa).

At 1-4 the chain is on the cytoplasmic side; the sequence is MIPR. Residues 1-22 constitute a propeptide, signal peptide; the sequence is MIPRVLILLTLVALFCACSTLA. Residues 5 to 25 form a helical membrane-spanning segment; it reads VLILLTLVALFCACSTLAAVA. At 26–34 the chain is on the lumenal side; sequence HIEVDCIPP. The chain crosses the membrane as a helical span at residues 35 to 60; sequence FTVYLLYGFVTLILICSLVTVVIAFI. Residues 61-91 lie on the Cytoplasmic side of the membrane; it reads QFIDWVCVRIAYLRHHPQYRDRTIADLLRIL.

It belongs to the adenoviridae E3-RID-alpha family. Homodimer with only one chain cleaved by signal peptidase. Interacts with E3 RID-beta and E3 CR1-alpha. In terms of processing, the signal peptide is only cleaved partially by host signal peptidase. This results in two forms of the protein, one uncleaved with two transmembrane regions, and one cleaved with one transmembrane region.

It localises to the host membrane. Its subcellular location is the host endoplasmic reticulum. Functionally, prevents infected cell apoptosis induced by the host immune system. Acts by down-regulating a number of cell surface receptors in the tumor necrosis factor (TNF) receptor superfamily, namely FAS, TNFRSF10A/TRAIL receptor 1, and TNFRSF10B/TRAIL receptor 2. Down-regulation of these death receptors protects adenovirus-infected cells from apoptosis induced by the death receptor ligands Fas ligand and TRAIL. RID complex also down-regulates certain tyrosine kinase cell surface receptors, especially the epidermal growth factor receptor (EGFR). RID-mediated Fas and EGFR down-regulation occurs via endocytosis of the receptors into endosomes followed by transport to and degradation within lysosomes. This chain is Pre-early 3 receptor internalization and degradation alpha protein, found in Homo sapiens (Human).